A 458-amino-acid chain; its full sequence is Argininosuccinate lyase (458 aa).

This sequence belongs to the lyase 1 family. Argininosuccinate lyase subfamily.

The protein localises to the cytoplasm. It carries out the reaction 2-(N(omega)-L-arginino)succinate = fumarate + L-arginine. It participates in amino-acid biosynthesis; L-arginine biosynthesis; L-arginine from L-ornithine and carbamoyl phosphate: step 3/3. This Salmonella typhi protein is Argininosuccinate lyase.